A 626-amino-acid chain; its full sequence is MIFLTALPLFWIMISASRGGHWGAWMPSSISAFEGTCVSIPCRFDFPDELRPAVVHGVWYFNSPYPKNYPPVVFKSRTQVVHESFQGRSRLLGDLGLRNCTLLLSNVSPELGGKYYFRGDLGGYNQYTFSEHSVLDIVNTPNIVVPPEVVAGTEVEVSCMVPDNCPELRPELSWLGHEGLGEPAVLGRLREDEGTWVQVSLLHFVPTREANGHRLGCQASFPNTTLQFEGYASMDVKYPPVIVEMNSSVEAIEGSHVSLLCGADSNPPPLLTWMRDGTVLREAVAESLLLELEEVTPAEDGVYACLAENAYGQDNRTVGLSVMYAPWKPTVNGTMVAVEGETVSILCSTQSNPDPILTIFKEKQILSTVIYESELQLELPAVSPEDDGEYWCVAENQYGQRATAFNLSVEFAPVLLLESHCAAARDTVQCLCVVKSNPEPSVAFELPSRNVTVNESEREFVYSERSGLVLTSILTLRGQAQAPPRVICTARNLYGAKSLELPFQGAHRLMWAKIGPVGAVVAFAILIAIVCYITQTRRKKNVTESPSFSAGDNPPVLFSSDFRISGAPEKYESERRLGSERRLLGLRGEPPELDLSYSHSDLGKRPTKDSYTLTEELAEYAEIRVK.

The first 19 residues, Met1–Gly19, serve as a signal peptide directing secretion. The interval Gly20 to Ala325 is interaction with RTN4R and RTN4RL2. Over Gly20–Pro516 the chain is Extracellular. Residues Trp22–Asp120 form the Ig-like V-type domain. 3 disulfides stabilise this stretch: Cys37–Cys165, Cys42–Cys100, and Cys159–Cys217. Position 65-67 (Tyr65–Lys67) interacts with a ganglioside GT1b (d18:1(4E)). A glycan (N-linked (GlcNAc...) asparagine) is linked at Asn99. Asn106 carries an N-linked (GlcNAc...) asparagine; partial glycan. Residues Arg118 and Tyr124–Thr128 contribute to the a ganglioside GT1b (d18:1(4E)) site. 4 consecutive Ig-like C2-type domains span residues Asn139–Lys237, Val241–Ala325, Trp327–Ala412, and Pro413–Arg508. 2 N-linked (GlcNAc...) asparagine glycosylation sites follow: Asn223 and Asn246. A disulfide bond links Cys261 and Cys305. Asn315 carries N-linked (GlcNAc...) asparagine glycosylation. A disulfide bond links Cys347 and Cys392. N-linked (GlcNAc...) asparagine glycosylation is present at Asn406. 2 cysteine pairs are disulfide-bonded: Cys421–Cys430 and Cys432–Cys488. Residues Asn450 and Asn454 are each glycosylated (N-linked (GlcNAc...) asparagine). A helical membrane pass occupies residues Val517 to Thr536. A lipid anchor (S-palmitoyl cysteine) is attached at Cys531. The Cytoplasmic portion of the chain corresponds to Arg537–Lys626. 3 positions are modified to phosphoserine: Ser545, Ser547, and Ser549. Residues Leu577–Lys626 are required for normal axon myelination in the central nervous system. The tract at residues Arg582–Lys608 is disordered.

Belongs to the immunoglobulin superfamily. SIGLEC (sialic acid binding Ig-like lectin) family. Monomer and homodimer. Interacts (via the first three N-terminal Ig-like domains) with RTN4R and RTN4RL2. Interacts with RTN4R. Interacts with isoform 2 of BSG. In terms of processing, N-glycosylated. Phosphorylated on tyrosine residues. Post-translationally, ubiquitinated, leading to proteasomal degradation. Both isoform 1 and isoform 2 are detected in myelinated structures in the central and peripheral nervous system, in periaxonal myelin and at Schmidt-Lanterman incisures. Detected in optic nerve, in oligodendroglia and in periaxonal myelin sheaths. Detected in compact myelin (at protein level). Both isoform 1 and isoform 2 are detected in the central and peripheral nervous system.

The protein resides in the cell membrane. It localises to the membrane raft. In terms of biological role, adhesion molecule that mediates interactions between myelinating cells and neurons by binding to neuronal sialic acid-containing gangliosides and to the glycoproteins RTN4R and RTN4RL2. Not required for initial myelination, but seems to play a role in the maintenance of normal axon myelination. Protects motoneurons against apoptosis, also after injury; protection against apoptosis is probably mediated via interaction with neuronal RTN4R and RTN4RL2. Required to prevent degeneration of myelinated axons in adults; this probably depends on binding to gangliosides on the axon cell membrane. Negative regulator of neurite outgrowth; in dorsal root ganglion neurons the inhibition is mediated primarily via binding to neuronal RTN4R or RTN4RL2 and to a lesser degree via binding to neuronal gangliosides. In cerebellar granule cells the inhibition is mediated primarily via binding to neuronal gangliosides. In sensory neurons, inhibition of neurite extension depends only partially on RTN4R, RTN4RL2 and gangliosides. Inhibits axon longitudinal growth. Inhibits axon outgrowth by binding to RTN4R. Preferentially binds to alpha-2,3-linked sialic acid. Binds ganglioside Gt1b. This is Myelin-associated glycoprotein (MAG) from Homo sapiens (Human).